The sequence spans 142 residues: NTF2-related export protein 2 (142 aa).

Positions 17–136 (AAEEFVNIYY…WKIASDCFRF (120 aa)) constitute an NTF2 domain.

As to quaternary structure, associates with NXF1, NXF2, NXF3 and NXF5.

It is found in the nucleus. The protein resides in the cytoplasm. Its function is as follows. Regulator of protein export for NES-containing proteins. Also plays a role in mRNA nuclear export. In Bos taurus (Bovine), this protein is NTF2-related export protein 2 (NXT2).